A 354-amino-acid polypeptide reads, in one-letter code: Protein-arginine kinase (354 aa).

The Phosphagen kinase C-terminal domain maps to 24–254 (IVLSSRIRLA…QQIIQQEKMA (231 aa)). Residues 27–31 (SSRIR), histidine 92, arginine 125, 176–180 (RASVM), and 207–212 (RGIYGE) each bind ATP. The RDXXRA motif of the pArg binding pocket involved in allosteric regulation motif lies at 337 to 342 (RDYRRA).

The protein belongs to the ATP:guanido phosphotransferase family.

The enzyme catalyses L-arginyl-[protein] + ATP = N(omega)-phospho-L-arginyl-[protein] + ADP + H(+). Appears to be allosterically activated by the binding of pArg-containing polypeptides to the pArg-binding pocket localized in the C-terminal domain of McsB. Its function is as follows. Catalyzes the specific phosphorylation of arginine residues in a large number of proteins. Is part of the bacterial stress response system. Protein arginine phosphorylation has a physiologically important role and is involved in the regulation of many critical cellular processes, such as protein homeostasis, motility, competence, and stringent and stress responses, by regulating gene expression and protein activity. This chain is Protein-arginine kinase, found in Bacillus thuringiensis subsp. konkukian (strain 97-27).